Here is a 145-residue protein sequence, read N- to C-terminus: D-aminoacyl-tRNA deacylase (145 aa).

The Gly-cisPro motif, important for rejection of L-amino acids signature appears at 137–138; that stretch reads GP.

It belongs to the DTD family. Homodimer.

Its subcellular location is the cytoplasm. The catalysed reaction is glycyl-tRNA(Ala) + H2O = tRNA(Ala) + glycine + H(+). It catalyses the reaction a D-aminoacyl-tRNA + H2O = a tRNA + a D-alpha-amino acid + H(+). Its function is as follows. An aminoacyl-tRNA editing enzyme that deacylates mischarged D-aminoacyl-tRNAs. Also deacylates mischarged glycyl-tRNA(Ala), protecting cells against glycine mischarging by AlaRS. Acts via tRNA-based rather than protein-based catalysis; rejects L-amino acids rather than detecting D-amino acids in the active site. By recycling D-aminoacyl-tRNA to D-amino acids and free tRNA molecules, this enzyme counteracts the toxicity associated with the formation of D-aminoacyl-tRNA entities in vivo and helps enforce protein L-homochirality. The sequence is that of D-aminoacyl-tRNA deacylase from Lactobacillus gasseri (strain ATCC 33323 / DSM 20243 / BCRC 14619 / CIP 102991 / JCM 1131 / KCTC 3163 / NCIMB 11718 / NCTC 13722 / AM63).